The primary structure comprises 285 residues: Undecaprenyl-diphosphatase (285 aa).

7 helical membrane passes run Asp40–Phe60, Leu92–Ile112, Ser122–Ala142, Phe159–Ile179, Phe197–Leu217, Leu233–Leu253, and Phe259–Ile279.

The protein belongs to the UppP family.

Its subcellular location is the cell inner membrane. It catalyses the reaction di-trans,octa-cis-undecaprenyl diphosphate + H2O = di-trans,octa-cis-undecaprenyl phosphate + phosphate + H(+). Catalyzes the dephosphorylation of undecaprenyl diphosphate (UPP). Confers resistance to bacitracin. The sequence is that of Undecaprenyl-diphosphatase from Hyphomonas neptunium (strain ATCC 15444).